Reading from the N-terminus, the 555-residue chain is Phosphomethylpyrimidine synthase (555 aa).

Substrate-binding positions include asparagine 191, methionine 220, tyrosine 249, histidine 285, 305-307 (SRG), 346-349 (DGLR), and glutamate 385. Histidine 389 lines the Zn(2+) pocket. Tyrosine 412 serves as a coordination point for substrate. Histidine 453 contacts Zn(2+). [4Fe-4S] cluster is bound by residues cysteine 533, cysteine 536, and cysteine 541.

It belongs to the ThiC family. In terms of assembly, homodimer. [4Fe-4S] cluster serves as cofactor.

It catalyses the reaction 5-amino-1-(5-phospho-beta-D-ribosyl)imidazole + S-adenosyl-L-methionine = 4-amino-2-methyl-5-(phosphooxymethyl)pyrimidine + CO + 5'-deoxyadenosine + formate + L-methionine + 3 H(+). It participates in cofactor biosynthesis; thiamine diphosphate biosynthesis. Catalyzes the synthesis of the hydroxymethylpyrimidine phosphate (HMP-P) moiety of thiamine from aminoimidazole ribotide (AIR) in a radical S-adenosyl-L-methionine (SAM)-dependent reaction. This Ehrlichia ruminantium (strain Gardel) protein is Phosphomethylpyrimidine synthase.